A 508-amino-acid chain; its full sequence is ATP synthase subunit alpha, mitochondrial (508 aa).

171–178 (GDRQTGKT) contacts ATP.

This sequence belongs to the ATPase alpha/beta chains family. F-type ATPases have 2 components, CF(1) - the catalytic core - and CF(0) - the membrane proton channel. CF(1) has five subunits: alpha(3), beta(3), gamma(1), delta(1), epsilon(1). CF(0) has three main subunits: a, b and c.

Its subcellular location is the mitochondrion. The protein localises to the mitochondrion inner membrane. In terms of biological role, mitochondrial membrane ATP synthase (F(1)F(0) ATP synthase or Complex V) produces ATP from ADP in the presence of a proton gradient across the membrane which is generated by electron transport complexes of the respiratory chain. F-type ATPases consist of two structural domains, F(1) - containing the extramembraneous catalytic core, and F(0) - containing the membrane proton channel, linked together by a central stalk and a peripheral stalk. During catalysis, ATP synthesis in the catalytic domain of F(1) is coupled via a rotary mechanism of the central stalk subunits to proton translocation. Subunits alpha and beta form the catalytic core in F(1). Rotation of the central stalk against the surrounding alpha(3)beta(3) subunits leads to hydrolysis of ATP in three separate catalytic sites on the beta subunits. Subunit alpha does not bear the catalytic high-affinity ATP-binding sites. This chain is ATP synthase subunit alpha, mitochondrial (ATPA), found in Zea mays (Maize).